Reading from the N-terminus, the 548-residue chain is Chaperonin GroEL (548 aa).

Residues 30 to 33 (TLGP), Lys51, 87 to 91 (DGTTT), Gly415, 479 to 481 (NAA), and Asp495 each bind ATP.

It belongs to the chaperonin (HSP60) family. As to quaternary structure, forms a cylinder of 14 subunits composed of two heptameric rings stacked back-to-back. Interacts with the co-chaperonin GroES.

It is found in the cytoplasm. The enzyme catalyses ATP + H2O + a folded polypeptide = ADP + phosphate + an unfolded polypeptide.. Functionally, together with its co-chaperonin GroES, plays an essential role in assisting protein folding. The GroEL-GroES system forms a nano-cage that allows encapsulation of the non-native substrate proteins and provides a physical environment optimized to promote and accelerate protein folding. The protein is Chaperonin GroEL of Escherichia fergusonii (strain ATCC 35469 / DSM 13698 / CCUG 18766 / IAM 14443 / JCM 21226 / LMG 7866 / NBRC 102419 / NCTC 12128 / CDC 0568-73).